The chain runs to 60 residues: Large ribosomal subunit protein bL32 (60 aa).

Belongs to the bacterial ribosomal protein bL32 family.

The polypeptide is Large ribosomal subunit protein bL32 (Pseudothermotoga lettingae (strain ATCC BAA-301 / DSM 14385 / NBRC 107922 / TMO) (Thermotoga lettingae)).